We begin with the raw amino-acid sequence, 423 residues long: Glutamate-1-semialdehyde 2,1-aminomutase (423 aa).

Lys-263 carries the post-translational modification N6-(pyridoxal phosphate)lysine.

Belongs to the class-III pyridoxal-phosphate-dependent aminotransferase family. HemL subfamily. Pyridoxal 5'-phosphate is required as a cofactor.

It is found in the cytoplasm. The catalysed reaction is (S)-4-amino-5-oxopentanoate = 5-aminolevulinate. It functions in the pathway porphyrin-containing compound metabolism; protoporphyrin-IX biosynthesis; 5-aminolevulinate from L-glutamyl-tRNA(Glu): step 2/2. This is Glutamate-1-semialdehyde 2,1-aminomutase from Ignicoccus hospitalis (strain KIN4/I / DSM 18386 / JCM 14125).